Consider the following 391-residue polypeptide: MSIVRMTDLDLSGKRVLIRQDLNVPIENGRITSEQRITASLPTLKRALEQGAAVMVTSHLGRPKEGVWSEADSLAPVAQRLSELLGREVPLVRDWVDGVEVQPGQLVLLENCRMNVGEGKDDEALSKKYAALCDVFVMDAFGTAHRAQASTHGVIRFAPVAAGGPLLMAELDALAQALDAPAKPLLAIVAGSKVSTKLELLANLVGKVDQLIVGGGIANTFIAAAGYNVGKSLYEPDLLDTAKKIVADAKARGADIPLPVDVVTAKQFMPDAVAEVKAVDAVAEDDLILDIGPQTAAQYAQLIDKAGTVVWNGPVGVFEFEAFSKGTEALARAIASSRAFSIAGGGDTLAAVDKFDIAQQVSYISTGGGAFLEFLEGKTLPAVAALDARGA.

Residues 21-23 (DLN), R36, 59-62 (HLGR), R113, and R146 each bind substrate. ATP contacts are provided by residues K197, E319, and 345–348 (GGDT).

The protein belongs to the phosphoglycerate kinase family. Monomer.

The protein localises to the cytoplasm. It catalyses the reaction (2R)-3-phosphoglycerate + ATP = (2R)-3-phospho-glyceroyl phosphate + ADP. It participates in carbohydrate degradation; glycolysis; pyruvate from D-glyceraldehyde 3-phosphate: step 2/5. The chain is Phosphoglycerate kinase from Stenotrophomonas maltophilia (strain K279a).